The following is a 699-amino-acid chain: Serine/threonine-protein kinase PRR2 (699 aa).

Positions 168-193 (SSTKKNLANDISDNKHNNNSSNTIGH) are disordered. The segment covering 184-193 (NNNSSNTIGH) has biased composition (polar residues). The Protein kinase domain occupies 361–653 (RDLDVVLGEG…INGILQDGWI (293 aa)). ATP-binding positions include 367–375 (LGEGSGGKV) and Lys390. Catalysis depends on Asp484, which acts as the Proton acceptor.

It belongs to the protein kinase superfamily. Ser/Thr protein kinase family.

It carries out the reaction L-seryl-[protein] + ATP = O-phospho-L-seryl-[protein] + ADP + H(+). The enzyme catalyses L-threonyl-[protein] + ATP = O-phospho-L-threonyl-[protein] + ADP + H(+). Protein kinase that functions as a regulator in the pheromone-induced mating pathway downstream of mitogen-activated protein kinase (MAPK) FUS3. Diminishes transcriptional induction of genes in response to pheromone signaling. The chain is Serine/threonine-protein kinase PRR2 (PRR2) from Saccharomyces cerevisiae (strain ATCC 204508 / S288c) (Baker's yeast).